The sequence spans 954 residues: Glycine dehydrogenase (decarboxylating) (954 aa).

Lys-704 carries the post-translational modification N6-(pyridoxal phosphate)lysine.

This sequence belongs to the GcvP family. As to quaternary structure, the glycine cleavage system is composed of four proteins: P, T, L and H. It depends on pyridoxal 5'-phosphate as a cofactor.

The catalysed reaction is N(6)-[(R)-lipoyl]-L-lysyl-[glycine-cleavage complex H protein] + glycine + H(+) = N(6)-[(R)-S(8)-aminomethyldihydrolipoyl]-L-lysyl-[glycine-cleavage complex H protein] + CO2. In terms of biological role, the glycine cleavage system catalyzes the degradation of glycine. The P protein binds the alpha-amino group of glycine through its pyridoxal phosphate cofactor; CO(2) is released and the remaining methylamine moiety is then transferred to the lipoamide cofactor of the H protein. This Agrobacterium fabrum (strain C58 / ATCC 33970) (Agrobacterium tumefaciens (strain C58)) protein is Glycine dehydrogenase (decarboxylating).